The following is a 267-amino-acid chain: Hydroxyacylglutathione hydrolase (267 aa).

Zn(2+)-binding residues include His55, His57, Asp59, His60, His121, Asp138, and His176.

This sequence belongs to the metallo-beta-lactamase superfamily. Glyoxalase II family. As to quaternary structure, monomer. Requires Zn(2+) as cofactor.

It catalyses the reaction an S-(2-hydroxyacyl)glutathione + H2O = a 2-hydroxy carboxylate + glutathione + H(+). Its pathway is secondary metabolite metabolism; methylglyoxal degradation; (R)-lactate from methylglyoxal: step 2/2. In terms of biological role, thiolesterase that catalyzes the hydrolysis of S-D-lactoyl-glutathione to form glutathione and D-lactic acid. The sequence is that of Hydroxyacylglutathione hydrolase from Shewanella sp. (strain ANA-3).